The chain runs to 682 residues: Potassium-transporting ATPase ATP-binding subunit (682 aa).

4 consecutive transmembrane segments (helical) span residues 34-54, 62-82, 219-239, and 254-274; these read PVMF…IAMA, ALFS…ANFA, IALT…TATL, and VLVA…LSAI. The active-site 4-aspartylphosphate intermediate is the aspartate 307. Residues aspartate 344, glutamate 348, 377-384, and lysine 395 contribute to the ATP site; that span reads FTAQSRMS. Mg(2+) contacts are provided by aspartate 518 and aspartate 522. Helical transmembrane passes span 588-608, 616-636, and 656-676; these read FAII…LNIM, AILS…PLAL, and IYGL…DLLL.

The protein belongs to the cation transport ATPase (P-type) (TC 3.A.3) family. Type IA subfamily. The system is composed of three essential subunits: KdpA, KdpB and KdpC.

The protein localises to the cell inner membrane. It carries out the reaction K(+)(out) + ATP + H2O = K(+)(in) + ADP + phosphate + H(+). Functionally, part of the high-affinity ATP-driven potassium transport (or Kdp) system, which catalyzes the hydrolysis of ATP coupled with the electrogenic transport of potassium into the cytoplasm. This subunit is responsible for energy coupling to the transport system and for the release of the potassium ions to the cytoplasm. This Escherichia coli (strain ATCC 8739 / DSM 1576 / NBRC 3972 / NCIMB 8545 / WDCM 00012 / Crooks) protein is Potassium-transporting ATPase ATP-binding subunit.